We begin with the raw amino-acid sequence, 114 residues long: Adapter SH3BGRL (114 aa).

The segment at 13 to 50 is required for interaction with HER2; it reads SMAIKKKQQDVLGFLEANKIGFEEKDIAANEENRKWMR. The interval 54 to 71 is required for interaction with PFN1, HER2, and ATG12; that stretch reads PENSRPATGYPLPPQIFN. An SH3-binding motif is present at residues 61–67; that stretch reads TGYPLPP.

It belongs to the SH3BGR family. Monomer. Interacts with PFN1/Profilin-1. Interacts with ERBB2. Interacts with ATG12. Interacts with BECN1. Interacts with translating ribosomes.

The protein resides in the cytoplasm. It is found in the cytosol. It localises to the cell membrane. Appears to function as an adapter protein that bridges proteins together or proteins with mRNAs. May function as a ubiquitin ligase-substrate adapter. Additionally, associates with translating cytoplasmic ribosomes and may promote the expression of specific mRNAs. In Bos taurus (Bovine), this protein is Adapter SH3BGRL (SH3BGRL).